A 58-amino-acid polypeptide reads, in one-letter code: Small ribosomal subunit protein bS21 (58 aa).

The segment at 24–58 (TKAGTLQEARKREHYEKPSVKRKRKSEAARKRKKI) is disordered. The span at 31 to 42 (EARKREHYEKPS) shows a compositional bias: basic and acidic residues. A compositionally biased stretch (basic residues) spans 43-58 (VKRKRKSEAARKRKKI).

Belongs to the bacterial ribosomal protein bS21 family.

The protein is Small ribosomal subunit protein bS21 of Streptococcus thermophilus (strain CNRZ 1066).